A 272-amino-acid polypeptide reads, in one-letter code: Phosphate import ATP-binding protein PstB (272 aa).

An ABC transporter domain is found at 18–257 (VSMQNVTISY…FNDTQSIFNS (240 aa)). ATP is bound at residue 50 to 57 (GPSGCGKS).

It belongs to the ABC transporter superfamily. Phosphate importer (TC 3.A.1.7) family. The complex is composed of two ATP-binding proteins (PstB), two transmembrane proteins (PstC and PstA) and a solute-binding protein (PstS).

The protein resides in the cell inner membrane. The enzyme catalyses phosphate(out) + ATP + H2O = ADP + 2 phosphate(in) + H(+). In terms of biological role, part of the ABC transporter complex PstSACB involved in phosphate import. Responsible for energy coupling to the transport system. The polypeptide is Phosphate import ATP-binding protein PstB (Synechococcus sp. (strain CC9902)).